Reading from the N-terminus, the 1113-residue chain is Protein KIBRA (1113 aa).

WW domains are found at residues 6–39 (LPLPEGWEEARDFDGKVYYIDHTNRTTSWIDPRD) and 53–86 (DELPLGWEEAYDPQVGDYFIDHNTKTTQIEDPRV). Coiled-coil stretches lie at residues 107-193 (LSAQ…RGFQ) and 293-431 (NSNN…SSMQ). Ser141 carries the phosphoserine modification. Disordered regions lie at residues 429–448 (SMQSLSSGSSPGSLTSSRGS) and 522–547 (RSLSGTPKSMTSLSPRSSLSSPSPPC). Residues 522-532 (RSLSGTPKSMT) show a composition bias toward polar residues. Residues 533–542 (SLSPRSSLSS) show a composition bias toward low complexity. Ser535 carries the post-translational modification Phosphoserine. The residue at position 542 (Ser542) is a Phosphoserine; by CDK1. A C2 domain is found at 658–781 (GATRIQIALK…RSGERSTRWY (124 aa)). Residues 825–975 (LEKRQEGRSS…RSVRMKRPSS (151 aa)) are disordered. Positions 839–1113 (EDSWRYEETS…NIPALSADDV (275 aa)) are interaction with histone H3. The span at 847–870 (TSENEAVAEEEEEEVEEEEGEEDV) shows a compositional bias: acidic residues. Residue Ser899 is modified to Phosphoserine. Thr912 bears the Phosphothreonine mark. Residues 924–938 (IIRSKTFSPGPQSQY) show a composition bias toward polar residues. Ser927 is subject to Phosphoserine. Thr929 is modified (phosphothreonine). Phosphoserine; by CDK1 is present on Ser931. Residue Ser947 is modified to Phosphoserine. Interaction with PRKCZ stretches follow at residues 953–996 (SKKP…LDLQ) and 956–975 (PPFVRNSLERRSVRMKRPSS). Ser975 and Ser978 each carry phosphoserine; by PKC/PRKCZ. The stretch at 1001 to 1032 (WHSQLTQEISVLKELKEQLEQAKSHGEKELPQ) forms a coiled coil. Residues 1111–1113 (DDV) carry the ADDV motif motif.

It belongs to the WWC family. KIBRA subfamily. As to quaternary structure, homodimer. Forms heterodimers with WWC2 and WWC3. Interacts with DDN. Interacts with DYNLL1 and histone H3. The interaction with DYNLL1 is mandatory for the recruitment and transactivation functions of ESR1 or DYNLL1 to the target chromatin and the interaction with histone H3 ensures proper regulatory interaction of WWC1-DYNLL1-ESR1 complexes with target chromatin. Interacts (via WW domains) with DDR1 (via PPxY motif) in a collagen-regulated manner. Interacts with PRKCZ (via the protein kinase domain). Forms a tripartite complex with DDR1 and PRKCZ, but predominantly in the absence of collagen. Interacts (via the ADDV motif) with PATJ (via PDZ domain 8). Interacts (via WW domains) with SYNPO (via PPxY motifs). Interacts with NF2 and SNX4. Interacts with DLC1 and PRKCZ. Interacts (via WW domains) with LATS1 and LATS2. Post-translationally, phosphorylation at Ser-542 and Ser-931 by CDK1 in response to spindle damage stress regulates mitotic exit, these two sites are dephosphorylated by CDC14B. In terms of tissue distribution, expressed in mammary epithelial cells and breast cancer cell lines. Found in the luminal epithelium surrounding the ducts in the normal breast. In the brain, expressed in somatodendritic compartment of neurons in the cortex and hippocampus and in the cerebellum it is found in the Purkinje cells and some granule cells (at protein level). Detected in brain, heart, colon and kidney. In the kidney, expressed in glomerular podocytes, in some tubules and in the collecting duct.

The protein resides in the cytoplasm. It localises to the perinuclear region. Its subcellular location is the nucleus. The protein localises to the cell projection. It is found in the ruffle membrane. The protein resides in the cytosol. In terms of biological role, regulator of the Hippo signaling pathway, also known as the Salvador-Warts-Hippo (SWH) pathway. Enhances phosphorylation of LATS1 and YAP1 and negatively regulates cell proliferation and organ growth due to a suppression of the transcriptional activity of YAP1, the major effector of the Hippo pathway. Along with NF2 can synergistically induce the phosphorylation of LATS1 and LATS2 and function in the regulation of Hippo signaling pathway. Acts as a transcriptional coactivator of ESR1 which plays an essential role in DYNLL1-mediated ESR1 transactivation. Regulates collagen-stimulated activation of the ERK/MAPK cascade. Modulates directional migration of podocytes. Plays a role in cognition and memory performance. Plays an important role in regulating AMPA-selective glutamate receptors (AMPARs) trafficking underlying synaptic plasticity and learning. The chain is Protein KIBRA from Homo sapiens (Human).